The sequence spans 837 residues: Protein translocase subunit SecA (837 aa).

ATP is bound by residues Gln-85, Gly-103–Thr-107, and Asp-493. Zn(2+) is bound by residues Cys-821, Cys-823, Cys-832, and His-833.

Belongs to the SecA family. As to quaternary structure, monomer and homodimer. Part of the essential Sec protein translocation apparatus which comprises SecA, SecYEG and auxiliary proteins SecDF. Other proteins may also be involved. Requires Zn(2+) as cofactor.

The protein localises to the cell membrane. Its subcellular location is the cytoplasm. The enzyme catalyses ATP + H2O + cellular proteinSide 1 = ADP + phosphate + cellular proteinSide 2.. Functionally, part of the Sec protein translocase complex. Interacts with the SecYEG preprotein conducting channel. Has a central role in coupling the hydrolysis of ATP to the transfer of proteins into and across the cell membrane, serving as an ATP-driven molecular motor driving the stepwise translocation of polypeptide chains across the membrane. This chain is Protein translocase subunit SecA, found in Streptococcus pneumoniae serotype 2 (strain D39 / NCTC 7466).